The chain runs to 188 residues: UPF0340 protein BH3766 (188 aa).

Belongs to the UPF0340 family.

The protein is UPF0340 protein BH3766 of Halalkalibacterium halodurans (strain ATCC BAA-125 / DSM 18197 / FERM 7344 / JCM 9153 / C-125) (Bacillus halodurans).